A 609-amino-acid polypeptide reads, in one-letter code: ATP-dependent lipid A-core flippase (609 aa).

6 consecutive transmembrane segments (helical) span residues 47–67 (LLAA…IYLI), 88–108 (ILML…VGSF), 167–187 (AIIT…VMFV), 190–210 (WQLS…ISII), 279–299 (VIQI…AIFG), and 305–325 (GSSW…AAIL). The ABC transmembrane type-1 domain maps to 47 to 340 (LLAAIGSIFF…LTKVNVVIQK (294 aa)). In terms of domain architecture, ABC transporter spans 372 to 606 (VTIKDLSFAF…GGLYTRLYQS (235 aa)). 404–411 (GKSGSGKT) serves as a coordination point for ATP.

It belongs to the ABC transporter superfamily. Lipid exporter (TC 3.A.1.106) family. As to quaternary structure, homodimer.

The protein resides in the cell inner membrane. The enzyme catalyses ATP + H2O + lipid A-core oligosaccharideSide 1 = ADP + phosphate + lipid A-core oligosaccharideSide 2.. Its function is as follows. Involved in lipopolysaccharide (LPS) biosynthesis. Translocates lipid A-core from the inner to the outer leaflet of the inner membrane. Transmembrane domains (TMD) form a pore in the inner membrane and the ATP-binding domain (NBD) is responsible for energy generation. The chain is ATP-dependent lipid A-core flippase from Francisella tularensis subsp. holarctica (strain LVS).